Reading from the N-terminus, the 207-residue chain is p-benzoquinone reductase (207 aa).

The Flavodoxin-like domain maps to 5–196 (IQIVFYSSYG…QIARFQGKHV (192 aa)). Residues 11 to 16 (SSYGHI), 84 to 86 (TRF), 119 to 125 (STASQHG), and H140 each bind FMN. Residue Y13 participates in NADP(+) binding.

The protein belongs to the WrbA family. Homodimer. It depends on FMN as a cofactor.

It catalyses the reaction 1,4-benzoquinone + NADPH + H(+) = hydroquinone + NADP(+). It functions in the pathway xenobiotic degradation; 4-nitrophenol degradation. Functionally, involved in the degradation of para-nitrophenol (PNP). Catalyzes the reduction of p-benzoquinone to hydroquinone. This is p-benzoquinone reductase (pnpB) from Pseudomonas sp. (strain WBC-3).